A 143-amino-acid polypeptide reads, in one-letter code: Sperm mitochondrial-associated cysteine-rich protein (143 aa).

3 positions are modified to phosphoserine: Ser-37, Ser-44, and Ser-110. The disordered stretch occupies residues 101 to 143; sequence CCSSENKTESDSDTSGQTLEKGSQSPQSPPGAQGNWNQKKSNK. The span at 113-126 shows a compositional bias: polar residues; it reads DTSGQTLEKGSQSP. Ser-128 carries the phosphoserine modification. Residues 134 to 143 show a composition bias toward polar residues; it reads GNWNQKKSNK.

As to expression, testis. Is selectively expressed in the spermatids of seminiferous tubules.

The protein resides in the cytoplasm. It is found in the mitochondrion membrane. Functionally, involved in sperm motility. Its absence is associated with genetic background dependent male infertility. Infertility may be due to reduced sperm motility in the female reproductive tract and inability to penetrate the oocyte zona pellucida. This chain is Sperm mitochondrial-associated cysteine-rich protein (Smcp), found in Mus musculus (Mouse).